Consider the following 107-residue polypeptide: Small integral membrane protein 19 (107 aa).

A helical membrane pass occupies residues 25-43 (ATNVYLIVILVSFGLFMYA).

Belongs to the SMIM19 family.

It localises to the membrane. The protein is Small integral membrane protein 19 (SMIM19) of Homo sapiens (Human).